A 257-amino-acid chain; its full sequence is MEVARGENIRKRKFFDMDIPLNKGIKPISYKNIGINTLPKNNMSRKILFKDKISRDSISKDSLAKDNLSKSSMLKDDLTRDNSPKNGLIGKKRSAPLDISFQNMNSSMPSSTQKRTKILDEEIEDQSTSNENSPVIVDLTLKPSYMPKISRITEIIHKMKELNMNRIEDALPSNKKRNEYDDAKNILLQTMEMDEEDYEAENVVIEDSPYLNASLSEDDTDSSIVEVETDYSEEEKESMSESESSSDDESYSLYDSF.

Over residues 74 to 83 the composition is skewed to basic and acidic residues; sequence LKDDLTRDNS. Disordered regions lie at residues 74-115 and 209-257; these read LKDD…TQKR and PYLN…YDSF. A compositionally biased stretch (polar residues) spans 100–113; that stretch reads SFQNMNSSMPSSTQ. A compositionally biased stretch (acidic residues) spans 216–236; sequence SEDDTDSSIVEVETDYSEEEK.

It belongs to the asfivirus DP238L family.

This is an uncharacterized protein from Ornithodoros (relapsing fever ticks).